Consider the following 518-residue polypeptide: Ribonuclease Y (518 aa).

A helical transmembrane segment spans residues 2-22; it reads GSIIISALLALVIGAVVGFFV. The region spanning 208-271 is the KH domain; that stretch reads TVSVVNLPND…ETARIALDKL (64 aa). One can recognise an HD domain in the interval 334–427; it reads VLKHSVEVAF…VAAADALSAA (94 aa).

Belongs to the RNase Y family.

The protein localises to the cell membrane. Functionally, endoribonuclease that initiates mRNA decay. The protein is Ribonuclease Y of Geobacillus kaustophilus (strain HTA426).